The following is a 149-amino-acid chain: Large ribosomal subunit protein uL22c (149 aa).

The protein belongs to the universal ribosomal protein uL22 family. Part of the 50S ribosomal subunit.

It is found in the plastid. The protein localises to the chloroplast. Its function is as follows. This protein binds specifically to 23S rRNA. The globular domain of the protein is located near the polypeptide exit tunnel on the outside of the subunit, while an extended beta-hairpin is found that lines the wall of the exit tunnel in the center of the 70S ribosome. In Brachypodium distachyon (Purple false brome), this protein is Large ribosomal subunit protein uL22c (rpl22).